A 119-amino-acid chain; its full sequence is Circadian clock oscillator protein KaiB (119 aa).

This sequence belongs to the KaiB family. In terms of assembly, the KaiABC complex composition changes during the circadian cycle to control KaiC phosphorylation. Complexes KaiC(6), KaiA(2-4):KaiC(6), KaiB(6):KaiC(6) and KaiC(6):KaiB(6):KaiA(12) are among the most important forms, many form cooperatively. Undergoes a major conformational rearrangment; in the free state forms homotetramers as a dimer of dimers. When bound to the CI domain of KaiC switches to a monomeric thioredoxin-fold (KaiB(fs)). KaiB(fs) binds CikA, leading it to dephosphorylate phospho-RpaA.

Functionally, key component of the KaiABC oscillator complex, which constitutes the main circadian regulator in cyanobacteria. Complex composition changes during the circadian cycle to control KaiC phosphorylation. KaiA stimulates KaiC autophosphorylation, while KaiB sequesters KaiA, leading to KaiC autodephosphorylation. Phospho-Ser-431 KaiC accumulation triggers binding of KaiB to form the KaiB(6):KaiC(6) complex, leading to changes in output regulators CikA and SasA. KaiB switches to a thioredoxin-like fold (KaiB(fs)) when bound to KaiC. KaiB(6):KaiC(6) formation exposes a site for KaiA binding that sequesters KaiA from KaiC, making the KaiC(6):KaiB(6):KaiA(12) complex that results in KaiC autodephosphorylation. A metamorphic protein which reversibly switches between an inactive tetrameric fold and a rare, thioredoxin-like monomeric fold (KaiB(fs)). KaiB(fs) binds phospho-KaiC, KaiA and CikA. KaiA and CikA compete for binding to KaiB(fs), and KaiB(fs) and SasA compete for binding to KaiC, thus the clock oscillator and output signal pathway are tightly coupled. The sequence is that of Circadian clock oscillator protein KaiB from Synechococcus sp. (strain CC9311).